The chain runs to 510 residues: Anaerobic nitric oxide reductase transcription regulator NorR (510 aa).

One can recognise a Sigma-54 factor interaction domain in the interval 188–417 (IIGNSQGMRT…LEHVIKRAAV (230 aa)). ATP-binding positions include 216–223 (GETGVGKE) and 279–288 (ADGGTLFLDE). A DNA-binding region (H-T-H motif) is located at residues 486–505 (WAATARQLELDSGNLHRLAK).

It functions in the pathway nitrogen metabolism; nitric oxide reduction. Functionally, required for the expression of anaerobic nitric oxide (NO) reductase, acts as a transcriptional activator for at least the norVW operon. Activation also requires sigma-54. In Vibrio vulnificus (strain YJ016), this protein is Anaerobic nitric oxide reductase transcription regulator NorR.